The sequence spans 754 residues: Condensin complex subunit 2 (754 aa).

The disordered stretch occupies residues 104 to 149 (LAQRKTNGASNGDDSNGGNGEGLGGDSDEANIEIDPLTGMPISNDP). Positions 118–128 (SNGGNGEGLGG) are enriched in gly residues. Ser-245 carries the post-translational modification Phosphoserine. The segment at 359–379 (CYPDENHDNTSHDEQDDDNVN) is disordered. Over residues 362–371 (DENHDNTSHD) the composition is skewed to basic and acidic residues. Residue Ser-548 is modified to Phosphoserine. A disordered region spans residues 665 to 688 (HDSRKNREQSSNDSETHTEDESTK).

It belongs to the CND2 (condensin subunit 2) family. Component of the condensin complex, which contains the SMC2 and SMC4 heterodimer, and three non SMC subunits that probably regulate the complex: BRN1, YCS4 and YCG1/YCS5.

The protein localises to the nucleus. It is found in the cytoplasm. The protein resides in the chromosome. Regulatory subunit of the condensin complex, a complex required for conversion of interphase chromatin into mitotic-like condense chromosomes. The condensin complex probably introduces positive supercoils into relaxed DNA in the presence of type I topoisomerases and converts nicked DNA into positive knotted forms in the presence of type II topoisomerases. The condensin complex probably also plays a role during interphase. The protein is Condensin complex subunit 2 (BRN1) of Saccharomyces cerevisiae (strain ATCC 204508 / S288c) (Baker's yeast).